Reading from the N-terminus, the 155-residue chain is Phosphoprotein pp24 (155 aa).

Positions 1 to 50 (MEFEAEHEGLTASWVAPAPQGGKGAEGRAGVADEAGHGKTEAECAEDGEK) are disordered. The segment covering 34 to 50 (EAGHGKTEAECAEDGEK) has biased composition (basic and acidic residues). The stretch at 76-107 (RKRIEAKYMDLLVEAERENKNLRKKYNIILDV) forms a coiled coil.

The protein is Phosphoprotein pp24 (MDV008) of Gallus gallus (Chicken).